A 602-amino-acid chain; its full sequence is Glutamyl-tRNA(Gln) amidotransferase subunit B, mitochondrial (602 aa).

Belongs to the GatB/GatE family. GatB subfamily. In terms of assembly, subunit of the heterotrimeric GatCAB amidotransferase (AdT) complex, composed of A, B and C subunits.

Its subcellular location is the mitochondrion. The enzyme catalyses L-glutamyl-tRNA(Gln) + L-glutamine + ATP + H2O = L-glutaminyl-tRNA(Gln) + L-glutamate + ADP + phosphate + H(+). In terms of biological role, allows the formation of correctly charged Gln-tRNA(Gln) through the transamidation of misacylated Glu-tRNA(Gln) in the mitochondria. The reaction takes place in the presence of glutamine and ATP through an activated gamma-phospho-Glu-tRNA(Gln). This Paracoccidioides lutzii (strain ATCC MYA-826 / Pb01) (Paracoccidioides brasiliensis) protein is Glutamyl-tRNA(Gln) amidotransferase subunit B, mitochondrial.